The following is a 329-amino-acid chain: DNA-directed RNA polymerase subunit alpha (329 aa).

The segment at 1–234 (MQGSVTEFLK…EQLDAFVELR (234 aa)) is alpha N-terminal domain (alpha-NTD). Residues 248–329 (FDPILLRPVD…WPPASLADDL (82 aa)) are alpha C-terminal domain (alpha-CTD).

It belongs to the RNA polymerase alpha chain family. Homodimer. The RNAP catalytic core consists of 2 alpha, 1 beta, 1 beta' and 1 omega subunit. When a sigma factor is associated with the core the holoenzyme is formed, which can initiate transcription.

The enzyme catalyses RNA(n) + a ribonucleoside 5'-triphosphate = RNA(n+1) + diphosphate. DNA-dependent RNA polymerase catalyzes the transcription of DNA into RNA using the four ribonucleoside triphosphates as substrates. The polypeptide is DNA-directed RNA polymerase subunit alpha (Shewanella putrefaciens (strain CN-32 / ATCC BAA-453)).